The sequence spans 535 residues: MSTLYQVNKIKEILIRFLETIIINGMNSFSSTVYGQNAERSNTPTLIDPSNKETANVCPISKNLFQSYPKGSYRNSQRLTSRNGLDRFIPMTSNKDTISLGRHSSLSRNLVNKTKNASETYQQLLEYALEVERDDNVFTYAKLQKSDMTQKCPTMVASEKDNKGKLNEKKNRSPENLLPFRILDAPELRDDFYTSLLSWSPKGDLAIGLAENIYLWSKELGPTRVLEESIYDVSSVAYSYNGDILAVGRVDGTLQFWQDNERVPRISIHHPGDIGVLAWKPVLETNRLLVGKGNGNIFVYDIIWSESTSKAVLVATITNAHDEQVCGLTWNHDGSQFASGGNDNRVCLFKGSDLRQPLYVWQQNAAVKALSFCPWQRSLLATGAGSHDKHIRFYNCFNGKKIDELYCGAQITSIHWSPKYREFSVTFGYSLETVQHRFAVYSWPQLECLVSVLPSVPDIRCVHSVLTSQLNETTGRCEMTDSIIIASSNETIKFFDLSEESSWHNSRVLTWHGIFDSQILEMLEGIDGKIDSHLR.

WD repeat units follow at residues 189-226 (RDDF…TRVL), 228-267 (ESIY…PRIS), 269-314 (HHPG…AVLV), 320-359 (AHDE…QPLY), 362-404 (QQNA…KIDE), and 462-505 (VHSV…SWHN).

This sequence belongs to the WD repeat CDC20/Fizzy family.

This is an uncharacterized protein from Schizosaccharomyces pombe (strain 972 / ATCC 24843) (Fission yeast).